Consider the following 308-residue polypeptide: uncharacterized protein (308 aa).

One can recognise an S4 RNA-binding domain in the interval methionine 15–methionine 81. Aspartate 139 is an active-site residue.

It belongs to the pseudouridine synthase RluA family.

The enzyme catalyses a uridine in RNA = a pseudouridine in RNA. This is an uncharacterized protein from Mycobacterium tuberculosis (strain CDC 1551 / Oshkosh).